A 217-amino-acid polypeptide reads, in one-letter code: Putative threonylcarbamoyl-AMP synthase (217 aa).

In terms of domain architecture, YrdC-like spans 14-199; that stretch reads SRGIVSAVGA…TPRVLRPGPV (186 aa).

Belongs to the SUA5 family.

It is found in the cytoplasm. The enzyme catalyses L-threonine + hydrogencarbonate + ATP = L-threonylcarbamoyladenylate + diphosphate + H2O. Its function is as follows. Required for the formation of a threonylcarbamoyl group on adenosine at position 37 (t(6)A37) in tRNAs that read codons beginning with adenine. Catalyzes the conversion of L-threonine, HCO(3)(-)/CO(2) and ATP to give threonylcarbamoyl-AMP (TC-AMP) as the acyladenylate intermediate, with the release of diphosphate. This chain is Putative threonylcarbamoyl-AMP synthase, found in Mycobacterium tuberculosis (strain CDC 1551 / Oshkosh).